We begin with the raw amino-acid sequence, 961 residues long: Integrator complex subunit 7 (961 aa).

Low complexity predominate over residues 937 to 955 (QVRLQQQQGQPPSQQQQQR). The segment at 937 to 961 (QVRLQQQQGQPPSQQQQQRTAYSRF) is disordered.

It belongs to the Integrator subunit 7 family. In terms of assembly, component of the Integrator complex, composed of core subunits INTS1, INTS2, INTS3, INTS4, INTS5, INTS6, INTS7, INTS8, INTS9/RC74, INTS10, INTS11/CPSF3L, INTS12, INTS13, INTS14 and INTS15. The core complex associates with protein phosphatase 2A subunits PPP2CA and PPP2R1A, to form the Integrator-PP2A (INTAC) complex.

It is found in the nucleus. The protein resides in the chromosome. Its subcellular location is the cytoplasm. Component of the integrator complex, a multiprotein complex that terminates RNA polymerase II (Pol II) transcription in the promoter-proximal region of genes. The integrator complex provides a quality checkpoint during transcription elongation by driving premature transcription termination of transcripts that are unfavorably configured for transcriptional elongation: the complex terminates transcription by (1) catalyzing dephosphorylation of the C-terminal domain (CTD) of Pol II subunit POLR2A/RPB1 and SUPT5H/SPT5, (2) degrading the exiting nascent RNA transcript via endonuclease activity and (3) promoting the release of Pol II from bound DNA. The integrator complex is also involved in terminating the synthesis of non-coding Pol II transcripts, such as enhancer RNAs (eRNAs), small nuclear RNAs (snRNAs), telomerase RNAs and long non-coding RNAs (lncRNAs). This chain is Integrator complex subunit 7 (INTS7), found in Gallus gallus (Chicken).